The following is a 675-amino-acid chain: Methionine--tRNA ligase (675 aa).

Positions 15 to 25 (PYANGSIHLGH) match the 'HIGH' region motif. Cys146, Cys149, Cys159, and Cys162 together coordinate Zn(2+). Positions 332–336 (KMSKS) match the 'KMSKS' region motif. Lys335 lines the ATP pocket. Residues 573-675 (DFAKIDMRIA…SGAKPGHQVK (103 aa)) form the tRNA-binding domain.

The protein belongs to the class-I aminoacyl-tRNA synthetase family. MetG type 1 subfamily. Homodimer. Zn(2+) is required as a cofactor.

It localises to the cytoplasm. It catalyses the reaction tRNA(Met) + L-methionine + ATP = L-methionyl-tRNA(Met) + AMP + diphosphate. Its function is as follows. Is required not only for elongation of protein synthesis but also for the initiation of all mRNA translation through initiator tRNA(fMet) aminoacylation. In Proteus mirabilis (strain HI4320), this protein is Methionine--tRNA ligase.